Here is a 365-residue protein sequence, read N- to C-terminus: MSKPPILTLADITKRFDTQEVLSGFNLSIEDGEFFTILGPSGCGKTTVLRLIAGFEGADEGRIMLNGQDVSKLSAEKRPVNTVFQSYALFPHMTVFDNVAFGLKMAKVSKPEIAERVKEALATVRLSDFATRKPHQLSGGQKQRVAIARAVVNRPKVLLLDESLSALDYKLRQQMQMELKQLQRKLGITFIYVTHDQEEALSMSDRVLVMHNGQAQQVGTPREIYECPNNLFVASFIGEINVFNAEIVESLSDYRYLAAMDGFKREIHADRRFEAGDKVHVLLRPEDLRIEYLEDAPDRPGFSGQVLERNYTGQTLDSQIQLQSGQTIMASEFFDEDDPDFDYSINQKVWVDWVHGWEHVIKAES.

The region spanning 7–237 (LTLADITKRF…PNNLFVASFI (231 aa)) is the ABC transporter domain. Residue 39–46 (GPSGCGKT) participates in ATP binding.

This sequence belongs to the ABC transporter superfamily. Spermidine/putrescine importer (TC 3.A.1.11.1) family. The complex is composed of two ATP-binding proteins (PotA), two transmembrane proteins (PotB and PotC) and a solute-binding protein (PotD).

It is found in the cell inner membrane. The catalysed reaction is ATP + H2O + polyamine-[polyamine-binding protein]Side 1 = ADP + phosphate + polyamineSide 2 + [polyamine-binding protein]Side 1.. In terms of biological role, part of the ABC transporter complex PotABCD involved in spermidine/putrescine import. Responsible for energy coupling to the transport system. The polypeptide is Spermidine/putrescine import ATP-binding protein PotA (Hahella chejuensis (strain KCTC 2396)).